A 257-amino-acid polypeptide reads, in one-letter code: Cytochrome b561 domain-containing protein At2g30890 (257 aa).

The N-terminal stretch at 1–21 (MEIHHQLLVSLLFLLLPLCSS) is a signal peptide. Residues 22–219 (QENTRSLAID…LFQDKWSYIQ (198 aa)) enclose the Cytochrome b561 domain. The next 5 helical transmembrane spans lie at 55 to 75 (VHGF…IISI), 91 to 111 (LFFL…IGAV), 125 to 145 (HQQL…LGFL), 157 to 177 (WFVG…INIY), and 191 to 211 (ANLW…VYLF). Positions 56, 95, 125, and 161 each coordinate heme b. The interval 235 to 257 (NISTAETGHGYEVEESKPELEKC) is disordered. A compositionally biased stretch (basic and acidic residues) spans 243 to 257 (HGYEVEESKPELEKC).

It depends on heme b as a cofactor.

It is found in the membrane. The protein is Cytochrome b561 domain-containing protein At2g30890 of Arabidopsis thaliana (Mouse-ear cress).